The chain runs to 283 residues: RNase adapter protein RapZ (283 aa).

8–15 is a binding site for ATP; that stretch reads GRSGSGKS. Residue 56 to 59 participates in GTP binding; it reads DVRN. The segment at 266–283 is RNA-binding; the sequence is RARGKNVQSRHRTLEKRK.

This sequence belongs to the RapZ-like family. RapZ subfamily. As to quaternary structure, homotrimer.

In terms of biological role, modulates the synthesis of GlmS, by affecting the processing and stability of the regulatory small RNA GlmZ. When glucosamine-6-phosphate (GlcN6P) concentrations are high in the cell, RapZ binds GlmZ and targets it to cleavage by RNase E. Consequently, GlmZ is inactivated and unable to activate GlmS synthesis. Under low GlcN6P concentrations, RapZ is sequestered and inactivated by an other regulatory small RNA, GlmY, preventing GlmZ degradation and leading to synthesis of GlmS. This is RNase adapter protein RapZ from Yersinia enterocolitica serotype O:8 / biotype 1B (strain NCTC 13174 / 8081).